Consider the following 346-residue polypeptide: MSEQKQSLSYKDAGVDIDAGNALVENIKGAVKRTTRPEVMGGLGGFGSVCQLPTGYKEPVLVAGTDGVGTKLRLAIDLAKHDTVGIDLVAMCVNDLIVQGAEPLFFLDYYATAKLDVAVASSVVEGIAEGCIQSGCALVGGETAEMPGMYHKGDYDIAGFCVGVAEKSRLIDGTNVAAGDQLIALGASGPHSNGFSLIRKVLEVNNTDTNELLEGKKIADHLLEPTKIYVKSVLELLKNVDVHALSHITGGGFWENIPRVLPETAQAVIKGDSWQWPSIFNWLQENGNITEHEMYRTFNCGVGMVIVVPADKVAQSIEVLTAHGENAWHLGEIADKADGEEQVVFA.

Belongs to the AIR synthase family.

The protein resides in the cytoplasm. The enzyme catalyses 2-formamido-N(1)-(5-O-phospho-beta-D-ribosyl)acetamidine + ATP = 5-amino-1-(5-phospho-beta-D-ribosyl)imidazole + ADP + phosphate + H(+). It participates in purine metabolism; IMP biosynthesis via de novo pathway; 5-amino-1-(5-phospho-D-ribosyl)imidazole from N(2)-formyl-N(1)-(5-phospho-D-ribosyl)glycinamide: step 2/2. The sequence is that of Phosphoribosylformylglycinamidine cyclo-ligase from Colwellia psychrerythraea (strain 34H / ATCC BAA-681) (Vibrio psychroerythus).